The primary structure comprises 228 residues: Aspartyl protease inhibitor (228 aa).

A signal peptide spans 1-15 (MKLIELCVLCAIAFA). The span at 88–112 (KLKSRMSGKKEEKAAVTSTKDEDLP) shows a compositional bias: basic and acidic residues. The interval 88 to 119 (KLKSRMSGKKEEKAAVTSTKDEDLPKPPQKPS) is disordered. Cys-134 and Cys-224 form a disulfide bridge.

Belongs to the protease inhibitor I33 family.

The protein resides in the secreted. Its function is as follows. Aspartyl protease inhibitor. The chain is Aspartyl protease inhibitor from Trichostrongylus colubriformis (Black scour worm).